Consider the following 732-residue polypeptide: Ferric aerobactin receptor (732 aa).

A signal peptide spans 1 to 25 (MMISKKYTLWALNPLLLTMMAPAVA). The short motif at 31–38 (ETFVVSAN) is the TonB box element. A TBDR plug domain is found at 43–153 (TVAEMAQTTW…TGGLINIVTK (111 aa)). The 575-residue stretch at 158–732 (ETMMEFEAGT…TFGLNYSVLF (575 aa)) folds into the TBDR beta-barrel domain. Residues 715–732 (YDYKGRGRTFGLNYSVLF) carry the TonB C-terminal box motif.

Belongs to the TonB-dependent receptor family.

The protein localises to the cell outer membrane. In terms of biological role, receptor for cloacin DF13/aerobactin. This is Ferric aerobactin receptor (iutA) from Escherichia coli.